We begin with the raw amino-acid sequence, 157 residues long: Transcription elongation factor GreA (157 aa).

This sequence belongs to the GreA/GreB family.

Necessary for efficient RNA polymerase transcription elongation past template-encoded arresting sites. The arresting sites in DNA have the property of trapping a certain fraction of elongating RNA polymerases that pass through, resulting in locked ternary complexes. Cleavage of the nascent transcript by cleavage factors such as GreA or GreB allows the resumption of elongation from the new 3'terminus. GreA releases sequences of 2 to 3 nucleotides. In Azorhizobium caulinodans (strain ATCC 43989 / DSM 5975 / JCM 20966 / LMG 6465 / NBRC 14845 / NCIMB 13405 / ORS 571), this protein is Transcription elongation factor GreA.